Consider the following 747-residue polypeptide: Myotubularin-related protein 12 (747 aa).

Residues 205–643 (FDTPKDWCWE…PEIKVWAQRY (439 aa)) enclose the Myotubularin phosphatase domain. Residues 449 to 558 (VPIFLLFLDC…RGQQKGSRFK (110 aa)) are interaction with MTM1. Residues 548–575 (DRGQQKGSRFKHQRQLSLPLTQSKSSPK) form a disordered region. The segment covering 562-572 (QLSLPLTQSKS) has biased composition (polar residues). Ser-564 and Ser-601 each carry phosphoserine.

This sequence belongs to the protein-tyrosine phosphatase family. Non-receptor class myotubularin subfamily. Heterodimer with lipid phosphatase MTM1. Heterodimer with lipid phosphatase MTMR2. Expressed in skeletal muscles (at protein level).

It localises to the cytoplasm. Its subcellular location is the sarcoplasmic reticulum. It is found in the myofibril. The protein localises to the sarcomere. Acts as an adapter for the myotubularin-related phosphatases. Regulates phosphatase MTM1 protein stability and possibly its intracellular location. By stabilizing MTM1 protein levels, required for skeletal muscle maintenance but not for myogenesis. This Mus musculus (Mouse) protein is Myotubularin-related protein 12 (Mtmr12).